The following is a 134-amino-acid chain: Holo-[acyl-carrier-protein] synthase (134 aa).

D8 and E57 together coordinate Mg(2+).

It belongs to the P-Pant transferase superfamily. AcpS family. The cofactor is Mg(2+).

Its subcellular location is the cytoplasm. The enzyme catalyses apo-[ACP] + CoA = holo-[ACP] + adenosine 3',5'-bisphosphate + H(+). Transfers the 4'-phosphopantetheine moiety from coenzyme A to a Ser of acyl-carrier-protein. This chain is Holo-[acyl-carrier-protein] synthase, found in Rhizobium rhizogenes (strain K84 / ATCC BAA-868) (Agrobacterium radiobacter).